Consider the following 318-residue polypeptide: UDP-N-acetylenolpyruvoylglucosamine reductase (318 aa).

Positions 39–202 (VGGPADLLVR…TRVQLTLRPG (164 aa)) constitute an FAD-binding PCMH-type domain. The active site involves arginine 182. A compositionally biased stretch (basic and acidic residues) spans 214–223 (DRDGRRRTQP). Residues 214-235 (DRDGRRRTQPLDRPTFGSTFTN) form a disordered region. The Proton donor role is filled by serine 231. Residue glutamate 301 is part of the active site.

Belongs to the MurB family. It depends on FAD as a cofactor.

It is found in the cytoplasm. The enzyme catalyses UDP-N-acetyl-alpha-D-muramate + NADP(+) = UDP-N-acetyl-3-O-(1-carboxyvinyl)-alpha-D-glucosamine + NADPH + H(+). The protein operates within cell wall biogenesis; peptidoglycan biosynthesis. Cell wall formation. This Anaeromyxobacter sp. (strain Fw109-5) protein is UDP-N-acetylenolpyruvoylglucosamine reductase.